We begin with the raw amino-acid sequence, 176 residues long: RING-H2 finger protein ATL14 (176 aa).

Residues 1 to 26 form a disordered region; it reads MSITIPYDGSISREPSPSPPPPKANT. The helical transmembrane segment at 37 to 57 threads the bilayer; the sequence is FLIGLIMIPVAITAFIFILTS. The segment at 115–157 adopts an RING-type; atypical zinc-finger fold; sequence CVVCIDGFRQGQWCRKLPRCGHVFHRKCVDLWLIKVSTCPICR.

Belongs to the RING-type zinc finger family. ATL subfamily.

Its subcellular location is the membrane. The catalysed reaction is S-ubiquitinyl-[E2 ubiquitin-conjugating enzyme]-L-cysteine + [acceptor protein]-L-lysine = [E2 ubiquitin-conjugating enzyme]-L-cysteine + N(6)-ubiquitinyl-[acceptor protein]-L-lysine.. The protein operates within protein modification; protein ubiquitination. This Arabidopsis thaliana (Mouse-ear cress) protein is RING-H2 finger protein ATL14 (ATL14).